Reading from the N-terminus, the 130-residue chain is Fumarate reductase subunit C (130 aa).

3 helical membrane passes run 34–54 (VPAV…KGGV), 60–80 (FVGF…LLAA), and 109–129 (IVKT…AVAL).

It belongs to the FrdC family. As to quaternary structure, part of an enzyme complex containing four subunits: a flavoprotein (FrdA), an iron-sulfur protein (FrdB), and two hydrophobic anchor proteins (FrdC and FrdD).

It is found in the cell inner membrane. Functionally, two distinct, membrane-bound, FAD-containing enzymes are responsible for the catalysis of fumarate and succinate interconversion; fumarate reductase is used in anaerobic growth, and succinate dehydrogenase is used in aerobic growth. Anchors the catalytic components of the fumarate reductase complex to the cell inner membrane, binds quinones. In Serratia proteamaculans (strain 568), this protein is Fumarate reductase subunit C.